Here is a 263-residue protein sequence, read N- to C-terminus: Receptor-transporting protein 1 (263 aa).

Residues 1 to 238 are Cytoplasmic-facing; that stretch reads MRIFRPWRLR…ETGSGCNFCS (238 aa). The 3CxxC-type zinc-finger motif lies at 88–197; sequence ASGRFHCSWC…GEFCEACQEG (110 aa). Residues 239–259 form a helical membrane-spanning segment; the sequence is IPWCLFWATVLMLIIYLQFSF. The Extracellular segment spans residues 260–263; it reads RTSV.

Belongs to the TMEM7 family. Interacts with olfactory receptors. Predominantly expressed in olfactory and vomeronasal organs, in mature olfactory sensory neurons.

Its subcellular location is the cell membrane. Specifically promotes functional cell surface expression of olfactory receptors, but not of other GPCRs. The sequence is that of Receptor-transporting protein 1 (Rtp1) from Mus musculus (Mouse).